A 91-amino-acid chain; its full sequence is Protein YchS (91 aa).

This is Protein YchS (ychS) from Escherichia coli O157:H7.